Reading from the N-terminus, the 333-residue chain is Geranylgeranyl pyrophosphate synthase olcC (333 aa).

The isopentenyl diphosphate site is built by Lys61, Arg64, and His93. Asp100 and Asp104 together coordinate Mg(2+). Arg109 is a binding site for dimethylallyl diphosphate. Arg110 contributes to the isopentenyl diphosphate binding site. 3 residues coordinate dimethylallyl diphosphate: Lys187, Thr188, and Gln221. Asp224 is a Mg(2+) binding site. Dimethylallyl diphosphate contacts are provided by Asn228, Lys238, and Lys248.

Belongs to the FPP/GGPP synthase family. Mg(2+) serves as cofactor.

It carries out the reaction isopentenyl diphosphate + dimethylallyl diphosphate = (2E)-geranyl diphosphate + diphosphate. The catalysed reaction is isopentenyl diphosphate + (2E)-geranyl diphosphate = (2E,6E)-farnesyl diphosphate + diphosphate. The enzyme catalyses isopentenyl diphosphate + (2E,6E)-farnesyl diphosphate = (2E,6E,10E)-geranylgeranyl diphosphate + diphosphate. The protein operates within secondary metabolite biosynthesis; terpenoid biosynthesis. Functionally, geranylgeranyl pyrophosphate synthase; part of the gene cluster that mediates the biosynthesis of 15-deoxyoxalicine B. The first step of the pathway is the synthesis of nicotinyl-CoA from nicotinic acid by the nicotinic acid-CoA ligase olcI. Nicotinyl-CoA is then a substrate of polyketide synthase olcA to produce 4-hydroxy-6-(3-pyridinyl)-2H-pyran-2-one (HPPO) which is further prenylated by the polyprenyl transferase olcH to yield geranylgeranyl-HPPO. Geranylgeranyl pyrophosphate is provided by the cluster-specific geranylgeranyl pyrophosphate synthase olcC. The FAD-dependent monooxygenase olcE catalyzes the epoxidation of geranylgeranyl-HPPO and the terpene cyclase olcD catalyzes the cyclization of the terpenoid component, resulting in the formation of the tricyclic terpene moiety seen in predecaturin E. The cytochrome P450 monooxygenase then catalyzes the allylic oxidation of predecaturin E, which is followed by spirocylization with concomitant loss of one molecule of water to form decaturin E. Decaturin E is the substrate of the cytochrome P450 monooxygenase olcJ which hydroxylates it at the C-29 position to form decaturin F. The short-chain dehydrogenase/reductase olcF may catalyze the oxidation of decaturin F to generate the 29-hydroxyl-27-one intermediate, and subsequent hemiacetal formation probably leads to the formation of decaturin C. The dioxygenase olcK may be a peroxisomal enzyme that catalyzes the hydroxylation of decaturin C into decaturin A once decaturin C is shuttled into the peroxisome by the MFS transporter olcL. Finally the cytochrome P450 monooxygenase olcB catalyzes the oxidative rearrangement to yield 15-deoxyoxalicine B. In the absence of olcJ, decaturin E may be shunted to a pathway in which it is oxidized to a ketone, possibly by olcF, to form decaturin D, which undergoes further allylic oxidation to yield decaturin G. Moreover, in the absence of oclK or oclL, oclB can convert decaturin C into 15-deoxyoxalicine A. The polypeptide is Geranylgeranyl pyrophosphate synthase olcC (Penicillium canescens).